Reading from the N-terminus, the 232-residue chain is tRNA1(Val) (adenine(37)-N6)-methyltransferase (232 aa).

This sequence belongs to the methyltransferase superfamily. tRNA (adenine-N(6)-)-methyltransferase family.

The protein localises to the cytoplasm. It catalyses the reaction adenosine(37) in tRNA1(Val) + S-adenosyl-L-methionine = N(6)-methyladenosine(37) in tRNA1(Val) + S-adenosyl-L-homocysteine + H(+). Functionally, specifically methylates the adenine in position 37 of tRNA(1)(Val) (anticodon cmo5UAC). This chain is tRNA1(Val) (adenine(37)-N6)-methyltransferase, found in Haemophilus influenzae (strain PittEE).